Consider the following 211-residue polypeptide: Ferric nitrobindin-like protein (211 aa).

Residues Gly21–Gly27 carry the GXWXGXG motif. The tract at residues Gly104–Ser130 is disordered.

This sequence belongs to the nitrobindin family.

The polypeptide is Ferric nitrobindin-like protein (Beutenbergia cavernae (strain ATCC BAA-8 / DSM 12333 / CCUG 43141 / JCM 11478 / NBRC 16432 / NCIMB 13614 / HKI 0122)).